Consider the following 287-residue polypeptide: Lys-63-specific deubiquitinase (287 aa).

The region spanning Val33–Gln176 is the MPN domain. Residues His119, His121, and Asp132 each contribute to the Zn(2+) site. Residues His119–Asp132 carry the JAMM motif motif. Residues Leu256–Glu283 are a coiled coil.

It belongs to the peptidase M67A family. BRCC36 subfamily. In terms of assembly, monomer. Homodimer. Component of the BRISC complex, at least composed of abraxas2, brcc3, babam1 and babam2. Interacts with abraxas2; the interaction is direct and may form a heterotetramer. Component of the BRCA1-A complex. Both the BRCA1-A complex and the BRISC complex bind polyubiquitin. Zn(2+) is required as a cofactor.

The protein localises to the nucleus. Its subcellular location is the cytoplasm. The protein resides in the cytoskeleton. It localises to the spindle pole. Metalloprotease that specifically cleaves 'Lys-63'-linked polyubiquitin chains, leaving the last ubiquitin chain attached to its substrates. Catalytic subunit of the BRISC complex, a multiprotein complex that specifically cleaves 'Lys-63'-linked ubiquitin in various substrates; brcc3 does not have activity by itself, but needs to be associated into a higher-order assembly, for minimal in vitro activity. This Danio rerio (Zebrafish) protein is Lys-63-specific deubiquitinase.